A 118-amino-acid chain; its full sequence is Probable FK506-binding protein (118 aa).

Residues 33–118 (GGEVEVHYVG…LVFIIDLISA (86 aa)) enclose the PPIase FKBP-type domain.

The protein belongs to the FKBP-type PPIase family.

The catalysed reaction is [protein]-peptidylproline (omega=180) = [protein]-peptidylproline (omega=0). Functionally, PPIases accelerate the folding of proteins. In Corynebacterium glutamicum (strain ATCC 13032 / DSM 20300 / JCM 1318 / BCRC 11384 / CCUG 27702 / LMG 3730 / NBRC 12168 / NCIMB 10025 / NRRL B-2784 / 534), this protein is Probable FK506-binding protein.